The following is a 281-amino-acid chain: Phosphate import ATP-binding protein PstB (281 aa).

In terms of domain architecture, ABC transporter spans 33–276; sequence FKIENLSLWY…PQLKRTRDYI (244 aa). 67–74 contacts ATP; it reads GPSGCGKS.

This sequence belongs to the ABC transporter superfamily. Phosphate importer (TC 3.A.1.7) family. In terms of assembly, the complex is composed of two ATP-binding proteins (PstB), two transmembrane proteins (PstC and PstA) and a solute-binding protein (PstS).

The protein localises to the cell membrane. The enzyme catalyses phosphate(out) + ATP + H2O = ADP + 2 phosphate(in) + H(+). Functionally, part of the ABC transporter complex PstSACB involved in phosphate import. Responsible for energy coupling to the transport system. In Mycoplasma mobile (strain ATCC 43663 / 163K / NCTC 11711) (Mesomycoplasma mobile), this protein is Phosphate import ATP-binding protein PstB.